Consider the following 311-residue polypeptide: Probable porphobilinogen deaminase (311 aa).

Cys237 carries the post-translational modification S-(dipyrrolylmethanemethyl)cysteine. The interval 270-289 is disordered; the sequence is SKTGDKNNPKSLGQSAGEEL.

The protein belongs to the HMBS family. Dipyrromethane is required as a cofactor.

It carries out the reaction 4 porphobilinogen + H2O = hydroxymethylbilane + 4 NH4(+). It participates in porphyrin-containing compound metabolism; protoporphyrin-IX biosynthesis; coproporphyrinogen-III from 5-aminolevulinate: step 2/4. Its function is as follows. Tetrapolymerization of the monopyrrole PBG into the hydroxymethylbilane pre-uroporphyrinogen in several discrete steps. This chain is Probable porphobilinogen deaminase, found in Nitrosopumilus maritimus (strain SCM1).